The following is a 461-amino-acid chain: Ornithine decarboxylase (461 aa).

An N6-(pyridoxal phosphate)lysine modification is found at Lys69. Pyridoxal 5'-phosphate-binding positions include Ser200, Gly237, and 274 to 277 (EPGR). Ser303 is modified (phosphoserine; by CK2). 331 to 332 (YD) serves as a coordination point for substrate. Catalysis depends on Cys360, which acts as the Proton donor; shared with dimeric partner. The residue at position 360 (Cys360) is an S-nitrosocysteine. Substrate is bound at residue Asp361. Tyr389 contributes to the pyridoxal 5'-phosphate binding site.

This sequence belongs to the Orn/Lys/Arg decarboxylase class-II family. Homodimer. Only the dimer is catalytically active, as the active sites are constructed of residues from both monomers. Pyridoxal 5'-phosphate serves as cofactor.

It catalyses the reaction L-ornithine + H(+) = putrescine + CO2. The protein operates within amine and polyamine biosynthesis; putrescine biosynthesis via L-ornithine pathway; putrescine from L-ornithine: step 1/1. Inhibited by antizymes (AZs) OAZ1, OAZ2 and OAZ3 in response to polyamine levels. AZs inhibit the assembly of the functional homodimer by binding to ODC monomers. Additionally, OAZ1 targets ODC monomers for ubiquitin-independent proteolytic destruction by the 26S proteasome. Catalyzes the first and rate-limiting step of polyamine biosynthesis that converts ornithine into putrescine, which is the precursor for the polyamines, spermidine and spermine. Polyamines are essential for cell proliferation and are implicated in cellular processes, ranging from DNA replication to apoptosis. The sequence is that of Ornithine decarboxylase (ODC1) from Bos taurus (Bovine).